The primary structure comprises 208 residues: Inosine triphosphate pyrophosphatase (208 aa).

The residue at position 2 (A2) is an N-acetylalanine. Residue 14-19 (TGNAKK) participates in ITP binding. Position 44 (E44) interacts with Mg(2+). ITP-binding positions include K56, 72–73 (DT), K89, 149–152 (FGWD), K172, and 177–178 (HR).

This sequence belongs to the HAM1 NTPase family. Homodimer. Mg(2+) serves as cofactor. Mn(2+) is required as a cofactor.

It is found in the cytoplasm. The catalysed reaction is ITP + H2O = IMP + diphosphate + H(+). It carries out the reaction dITP + H2O = dIMP + diphosphate + H(+). It catalyses the reaction XTP + H2O = XMP + diphosphate + H(+). The enzyme catalyses N(6)-hydroxy-dATP + H2O = N(6)-hydroxy-dAMP + diphosphate + H(+). In terms of biological role, pyrophosphatase that hydrolyzes the non-canonical purine nucleotides inosine triphosphate (ITP), deoxyinosine triphosphate (dITP) as well as 2'-deoxy-N-6-hydroxylaminopurine triphosphate (dHAPTP) and xanthosine 5'-triphosphate (XTP) to their respective monophosphate derivatives. The enzyme does not distinguish between the deoxy- and ribose forms. Probably excludes non-canonical purines from RNA and DNA precursor pools, thus preventing their incorporation into RNA and DNA and avoiding chromosomal lesions. The protein is Inosine triphosphate pyrophosphatase of Bos taurus (Bovine).